A 450-amino-acid polypeptide reads, in one-letter code: 23S rRNA (uracil(1939)-C(5))-methyltransferase RlmD (450 aa).

Residues Cys81, Cys87, Cys90, and Cys173 each contribute to the [4Fe-4S] cluster site. 6 residues coordinate S-adenosyl-L-methionine: Gln276, Phe305, Asn310, Glu326, Asp353, and Asp372. The Nucleophile role is filled by Cys402.

The protein belongs to the class I-like SAM-binding methyltransferase superfamily. RNA M5U methyltransferase family. RlmD subfamily.

The catalysed reaction is uridine(1939) in 23S rRNA + S-adenosyl-L-methionine = 5-methyluridine(1939) in 23S rRNA + S-adenosyl-L-homocysteine + H(+). In terms of biological role, catalyzes the formation of 5-methyl-uridine at position 1939 (m5U1939) in 23S rRNA. The sequence is that of 23S rRNA (uracil(1939)-C(5))-methyltransferase RlmD from Idiomarina loihiensis (strain ATCC BAA-735 / DSM 15497 / L2-TR).